The following is a 497-amino-acid chain: Type II secretion system protein E (497 aa).

An ATP-binding site is contributed by 255–262; sequence GPTGSGKS. Positions 388, 391, 419, and 422 each coordinate Zn(2+).

The protein belongs to the GSP E family. Forms homooligomers; most probably hexamers. Interacts with PulL/GspL. Requires Zn(2+) as cofactor.

The protein resides in the cell inner membrane. The catalysed reaction is ATP + H2O + cellular proteinSide 1 = ADP + phosphate + cellular proteinSide 2.. In terms of biological role, ATPase component of the type II secretion system required for the energy-dependent secretion of extracellular factors such as proteases and toxins from the periplasm. Acts as a molecular motor to provide the energy that is required for assembly of the pseudopilus and the extrusion of substrates generated in the cytoplasm. This Klebsiella pneumoniae protein is Type II secretion system protein E (pulE).